Here is a 375-residue protein sequence, read N- to C-terminus: Terpene cyclase braA (375 aa).

D116, N264, and S268 together coordinate Mg(2+). The D(D/E)XX(D/E) motif motif lies at 116 to 120 (DDEID). An NSE motif motif is present at residues 264–272 (NDVLSLQKE). Positions 348–355 (WSYSCERY) match the WxxxxxRY motif motif. The (2E,6E)-farnesyl diphosphate site is built by R354 and Y355.

Belongs to the terpene synthase family. In terms of assembly, homodimer. Mg(2+) serves as cofactor.

The enzyme catalyses (2E,6E)-farnesyl diphosphate + H2O = trichobrasilenol + diphosphate. It participates in secondary metabolite biosynthesis. Terpene cyclase; part of the gene cluster that mediates the biosynthesis of the brasilane terpene glycosides brasilane D and E. The biosynthesis starts with the activity of the terpene cyclase braA that converts farnesyl pyrophosphate into the sesquiterpene alcohol trichobrasilenol. Subsequently, trichobrasilenol is glycosylated by the O-glycosyltransferase braB putatively using UDP-GlcNAc as sugar donor to yield brasilane A. The latter then undergoes two rounds of oxidation performed by the cytochrome P450 monooxygenase braC. In the first round braC hydroxylates C-12 forming brasilane D, which serves as substrate in the second round to establish the epoxide at the bond between C-5 and C-10 and oxidize the alcohol at C-12 to an aldehyde leading to the final product brasilane E. The chain is Terpene cyclase braA from Annulohypoxylon truncatum (Hypoxylon truncatum).